Here is a 274-residue protein sequence, read N- to C-terminus: ATP synthase subunit a (274 aa).

Transmembrane regions (helical) follow at residues 43–63, 103–123, 149–169, 223–243, and 245–265; these read TLNI…LLVF, VIAP…MMDL, DVSI…FYSI, LIFI…LSVP, and AIFH…LTIV.

The protein belongs to the ATPase A chain family. F-type ATPases have 2 components, CF(1) - the catalytic core - and CF(0) - the membrane proton channel. CF(1) has five subunits: alpha(3), beta(3), gamma(1), delta(1), epsilon(1). CF(0) has three main subunits: a(1), b(2) and c(9-12). The alpha and beta chains form an alternating ring which encloses part of the gamma chain. CF(1) is attached to CF(0) by a central stalk formed by the gamma and epsilon chains, while a peripheral stalk is formed by the delta and b chains.

It localises to the cell inner membrane. Functionally, key component of the proton channel; it plays a direct role in the translocation of protons across the membrane. The chain is ATP synthase subunit a from Yersinia pestis bv. Antiqua (strain Antiqua).